We begin with the raw amino-acid sequence, 306 residues long: Flavin adenine dinucleotide synthase (306 aa).

FAD is bound by residues S59, I107, G164, 182–185, R190, and R300; that span reads DSNW.

The protein belongs to the PAPS reductase family. FAD1 subfamily.

The protein resides in the cytoplasm. The enzyme catalyses FMN + ATP + H(+) = FAD + diphosphate. The protein operates within cofactor biosynthesis; FAD biosynthesis; FAD from FMN: step 1/1. Catalyzes the adenylation of flavin mononucleotide (FMN) to form flavin adenine dinucleotide (FAD) coenzyme. This chain is Flavin adenine dinucleotide synthase, found in Saccharomyces cerevisiae (strain ATCC 204508 / S288c) (Baker's yeast).